A 191-amino-acid polypeptide reads, in one-letter code: Protein UL140 (191 aa).

Residues 28–48 (TLVVFGFIVTLLFFLFMLYFW) form a helical membrane-spanning segment.

It localises to the host membrane. The protein is Protein UL140 (UL140) of Homo sapiens (Human).